Reading from the N-terminus, the 404-residue chain is Exodeoxyribonuclease 7 large subunit (404 aa).

This sequence belongs to the XseA family. Heterooligomer composed of large and small subunits.

It is found in the cytoplasm. The enzyme catalyses Exonucleolytic cleavage in either 5'- to 3'- or 3'- to 5'-direction to yield nucleoside 5'-phosphates.. Its function is as follows. Bidirectionally degrades single-stranded DNA into large acid-insoluble oligonucleotides, which are then degraded further into small acid-soluble oligonucleotides. The chain is Exodeoxyribonuclease 7 large subunit from Caldanaerobacter subterraneus subsp. tengcongensis (strain DSM 15242 / JCM 11007 / NBRC 100824 / MB4) (Thermoanaerobacter tengcongensis).